The chain runs to 129 residues: Small ribosomal subunit protein uS11 (129 aa).

This sequence belongs to the universal ribosomal protein uS11 family. In terms of assembly, part of the 30S ribosomal subunit. Interacts with proteins S7 and S18. Binds to IF-3.

Functionally, located on the platform of the 30S subunit, it bridges several disparate RNA helices of the 16S rRNA. Forms part of the Shine-Dalgarno cleft in the 70S ribosome. The polypeptide is Small ribosomal subunit protein uS11 (Macrococcus caseolyticus (strain JCSC5402) (Macrococcoides caseolyticum)).